The primary structure comprises 129 residues: Small ribosomal subunit protein uS12 (129 aa).

Positions 1 to 25 (MPTYNQLVRFGRKSKTRKTKSPALE) are disordered. Over residues 10 to 20 (FGRKSKTRKTK) the composition is skewed to basic residues. A 3-methylthioaspartic acid modification is found at Asp-89. The interval 109 to 129 (GRKQGRSRYGTPRKQVAVTKK) is disordered.

Belongs to the universal ribosomal protein uS12 family. In terms of assembly, part of the 30S ribosomal subunit. Contacts proteins S8 and S17. May interact with IF1 in the 30S initiation complex.

With S4 and S5 plays an important role in translational accuracy. Its function is as follows. Interacts with and stabilizes bases of the 16S rRNA that are involved in tRNA selection in the A site and with the mRNA backbone. Located at the interface of the 30S and 50S subunits, it traverses the body of the 30S subunit contacting proteins on the other side and probably holding the rRNA structure together. The combined cluster of proteins S8, S12 and S17 appears to hold together the shoulder and platform of the 30S subunit. This is Small ribosomal subunit protein uS12 from Rickettsia peacockii (strain Rustic).